We begin with the raw amino-acid sequence, 113 residues long: UPF0339 protein MS1092 (113 aa).

2 tandem repeats follow at residues 11–59 and 62–110.

This sequence belongs to the UPF0339 family. Duplicated subfamily.

The chain is UPF0339 protein MS1092 from Mannheimia succiniciproducens (strain KCTC 0769BP / MBEL55E).